The primary structure comprises 347 residues: Phosphoribosylformylglycinamidine cyclo-ligase (347 aa).

Belongs to the AIR synthase family.

The protein localises to the cytoplasm. The enzyme catalyses 2-formamido-N(1)-(5-O-phospho-beta-D-ribosyl)acetamidine + ATP = 5-amino-1-(5-phospho-beta-D-ribosyl)imidazole + ADP + phosphate + H(+). Its pathway is purine metabolism; IMP biosynthesis via de novo pathway; 5-amino-1-(5-phospho-D-ribosyl)imidazole from N(2)-formyl-N(1)-(5-phospho-D-ribosyl)glycinamide: step 2/2. In Yersinia enterocolitica serotype O:8 / biotype 1B (strain NCTC 13174 / 8081), this protein is Phosphoribosylformylglycinamidine cyclo-ligase.